The primary structure comprises 117 residues: Probable prefoldin subunit 1 (117 aa).

The protein belongs to the prefoldin subunit beta family. In terms of assembly, heterohexamer of two PFD-alpha type and four PFD-beta type subunits.

Its subcellular location is the cytoplasm. Functionally, binds specifically to cytosolic chaperonin (c-CPN) and transfers target proteins to it. Binds to nascent polypeptide chain and promotes folding in an environment in which there are many competing pathways for nonnative proteins. Has a role in gonadogenesis. This is Probable prefoldin subunit 1 (pfd-1) from Caenorhabditis briggsae.